A 63-amino-acid chain; its full sequence is Alpha-conotoxin-like Am1.6 (63 aa).

Positions methionine 1–serine 21 are cleaved as a signal peptide. Residues phenylalanine 22–arginine 46 constitute a propeptide that is removed on maturation. Residues serine 50–proline 52 form a ser-Xaa-Pro motif, crucial for potent interaction with nAChR region.

The protein belongs to the conotoxin A superfamily. In terms of processing, is not hydroxylated. Post-translationally, contains 2 disulfide bonds. Expressed by the venom duct.

It is found in the secreted. Functionally, alpha-conotoxins act on postsynaptic membranes, they bind to the nicotinic acetylcholine receptors (nAChR) and thus inhibit them. This chain is Alpha-conotoxin-like Am1.6, found in Conus amadis (Amadis cone).